The sequence spans 129 residues: Small ribosomal subunit protein uS11 (129 aa).

This sequence belongs to the universal ribosomal protein uS11 family. In terms of assembly, part of the 30S ribosomal subunit. Interacts with proteins S7 and S18. Binds to IF-3.

Located on the platform of the 30S subunit, it bridges several disparate RNA helices of the 16S rRNA. Forms part of the Shine-Dalgarno cleft in the 70S ribosome. The sequence is that of Small ribosomal subunit protein uS11 from Bacillus anthracis (strain A0248).